Reading from the N-terminus, the 610-residue chain is Dihydroxy-acid dehydratase (610 aa).

D81 is a Mg(2+) binding site. Residue C122 coordinates [2Fe-2S] cluster. Residues D123 and K124 each contribute to the Mg(2+) site. An N6-carboxylysine modification is found at K124. C196 serves as a coordination point for [2Fe-2S] cluster. E492 serves as a coordination point for Mg(2+). Residue S518 is the Proton acceptor of the active site.

This sequence belongs to the IlvD/Edd family. In terms of assembly, homodimer. [2Fe-2S] cluster serves as cofactor. Requires Mg(2+) as cofactor.

It carries out the reaction (2R)-2,3-dihydroxy-3-methylbutanoate = 3-methyl-2-oxobutanoate + H2O. It catalyses the reaction (2R,3R)-2,3-dihydroxy-3-methylpentanoate = (S)-3-methyl-2-oxopentanoate + H2O. Its pathway is amino-acid biosynthesis; L-isoleucine biosynthesis; L-isoleucine from 2-oxobutanoate: step 3/4. The protein operates within amino-acid biosynthesis; L-valine biosynthesis; L-valine from pyruvate: step 3/4. Functions in the biosynthesis of branched-chain amino acids. Catalyzes the dehydration of (2R,3R)-2,3-dihydroxy-3-methylpentanoate (2,3-dihydroxy-3-methylvalerate) into 2-oxo-3-methylpentanoate (2-oxo-3-methylvalerate) and of (2R)-2,3-dihydroxy-3-methylbutanoate (2,3-dihydroxyisovalerate) into 2-oxo-3-methylbutanoate (2-oxoisovalerate), the penultimate precursor to L-isoleucine and L-valine, respectively. This is Dihydroxy-acid dehydratase from Ruegeria pomeroyi (strain ATCC 700808 / DSM 15171 / DSS-3) (Silicibacter pomeroyi).